The chain runs to 491 residues: Nucleoporin NUP42 (491 aa).

A C3H1-type zinc finger spans residues 1–25 (MAICNFFLQGRCRYGEKCWNEHPRG). Disordered regions lie at residues 23 to 82 (PRGG…SQRY) and 92 to 111 (TTWI…SGFG). A compositionally biased stretch (polar residues) spans 33–64 (RYQSQNRYQEQSRYQEQSRYPEQSRYPEQNRY). 10 FG repeats span residues 110–111 (FG), 259–260 (FG), 302–303 (FG), 312–313 (FG), 333–334 (FG), 342–343 (FG), 363–364 (FG), 375–376 (FG), 379–380 (FG), and 410–411 (FG).

Probable component of the nuclear pore complex (NPC).

It localises to the nucleus. The protein localises to the nuclear pore complex. The protein resides in the nucleus membrane. Functionally, required for the export of mRNAs containing poly(A) tails from the nucleus into the cytoplasm. The polypeptide is Nucleoporin NUP42 (nup42) (Xenopus laevis (African clawed frog)).